Here is a 386-residue protein sequence, read N- to C-terminus: Lipoyl synthase, mitochondrial (386 aa).

The tract at residues 1–48 (MHGRRHLAASLTRALTQAPSRSISSTPSLLQTLDPSVPSPSPPPAAEP) is disordered. Positions 13-34 (RALTQAPSRSISSTPSLLQTLD) are enriched in polar residues. Pro residues predominate over residues 37–46 (VPSPSPPPAA). [4Fe-4S] cluster-binding residues include cysteine 113, cysteine 118, cysteine 124, cysteine 144, cysteine 148, cysteine 151, and serine 360. Residues 129-349 (ETGTATATIM…RALGVEMGFR (221 aa)) form the Radical SAM core domain.

It belongs to the radical SAM superfamily. Lipoyl synthase family. It depends on [4Fe-4S] cluster as a cofactor.

It is found in the mitochondrion. The enzyme catalyses [[Fe-S] cluster scaffold protein carrying a second [4Fe-4S](2+) cluster] + N(6)-octanoyl-L-lysyl-[protein] + 2 oxidized [2Fe-2S]-[ferredoxin] + 2 S-adenosyl-L-methionine + 4 H(+) = [[Fe-S] cluster scaffold protein] + N(6)-[(R)-dihydrolipoyl]-L-lysyl-[protein] + 4 Fe(3+) + 2 hydrogen sulfide + 2 5'-deoxyadenosine + 2 L-methionine + 2 reduced [2Fe-2S]-[ferredoxin]. The protein operates within protein modification; protein lipoylation via endogenous pathway; protein N(6)-(lipoyl)lysine from octanoyl-[acyl-carrier-protein]: step 2/2. Its function is as follows. Catalyzes the radical-mediated insertion of two sulfur atoms into the C-6 and C-8 positions of the octanoyl moiety bound to the lipoyl domains of lipoate-dependent enzymes, thereby converting the octanoylated domains into lipoylated derivatives. The protein is Lipoyl synthase, mitochondrial of Sorghum bicolor (Sorghum).